Consider the following 136-residue polypeptide: DUF35 domain-containing scaffold protein (136 aa).

Residues cysteine 25, cysteine 38, and cysteine 41 each contribute to the Zn(2+) site.

The protein belongs to the scaffold protein DUF35 family. As to quaternary structure, interacts with acetoacetyl-CoA thiolase and HMG-CoA synthase (HMGCS) that catalyzes the first and second step in the mevalonate pathway, respectively.

In terms of biological role, functions as a scaffold to connect the acetoacetyl-CoA thiolase and HMG-CoA synthase (HMGCS) dimers in the channeling thiolase/HMGCS complex, which allows for efficient coupling of the endergonic thiolase reaction with the exergonic HMGCS reaction. The protein is DUF35 domain-containing scaffold protein of Pyrococcus furiosus (strain ATCC 43587 / DSM 3638 / JCM 8422 / Vc1).